A 422-amino-acid chain; its full sequence is tRNA hydroxylation protein P (422 aa).

A signal peptide spans 1 to 58; sequence MNQVELLSPAGNLKKLKIALNYGADAVYGGVSHFSLRNRAGKEFTLETFKEGIDYAHA.

It belongs to the peptidase U32 family.

Involved in prephenate-dependent formation of 5-hydroxyuridine (ho5U) modification at position 34 in tRNAs, the first step in 5-carboxymethoxyuridine (cmo5U) biosynthesis. The chain is tRNA hydroxylation protein P from Helicobacter pylori (strain ATCC 700392 / 26695) (Campylobacter pylori).